The following is a 201-amino-acid chain: Ciliary microtubule inner protein 2C (201 aa).

Belongs to the CIMIP2 family. In terms of assembly, microtubule inner protein component of sperm flagellar doublet microtubules. As to expression, expressed in airway epithelial cells.

It localises to the cytoplasm. The protein resides in the cytoskeleton. It is found in the cilium axoneme. The protein localises to the flagellum axoneme. Its function is as follows. Microtubule inner protein (MIP) part of the dynein-decorated doublet microtubules (DMTs) in cilia axoneme, which is required for motile cilia beating. Binds to the intra-tubulin interfaces. The polypeptide is Ciliary microtubule inner protein 2C (Homo sapiens (Human)).